Consider the following 254-residue polypeptide: Ribosomal RNA small subunit methyltransferase G (254 aa).

S-adenosyl-L-methionine is bound by residues G84, F89, 136–137 (VE), and R155.

It belongs to the methyltransferase superfamily. RNA methyltransferase RsmG family.

The protein resides in the cytoplasm. Functionally, specifically methylates the N7 position of a guanine in 16S rRNA. The protein is Ribosomal RNA small subunit methyltransferase G of Synechococcus sp. (strain CC9311).